A 397-amino-acid chain; its full sequence is Acetate kinase (397 aa).

Residue Asn-8 participates in Mg(2+) binding. An ATP-binding site is contributed by Lys-15. Arg-89 lines the substrate pocket. The active-site Proton donor/acceptor is Asp-146. ATP is bound by residues 206 to 210 (HLGNG), 281 to 283 (DLR), and 329 to 333 (GVGEN). Glu-382 contacts Mg(2+).

The protein belongs to the acetokinase family. As to quaternary structure, homodimer. Mg(2+) is required as a cofactor. Mn(2+) serves as cofactor.

Its subcellular location is the cytoplasm. The catalysed reaction is acetate + ATP = acetyl phosphate + ADP. It functions in the pathway metabolic intermediate biosynthesis; acetyl-CoA biosynthesis; acetyl-CoA from acetate: step 1/2. In terms of biological role, catalyzes the formation of acetyl phosphate from acetate and ATP. Can also catalyze the reverse reaction. In Bacillus thuringiensis subsp. konkukian (strain 97-27), this protein is Acetate kinase.